We begin with the raw amino-acid sequence, 473 residues long: Cysteine--tRNA ligase (473 aa).

A Zn(2+)-binding site is contributed by C29. The 'HIGH' region signature appears at 31 to 41 (ATVQSAPHIGH). 3 residues coordinate Zn(2+): C207, H232, and E236. Residues 263–267 (KMSKS) carry the 'KMSKS' region motif. Residue K266 participates in ATP binding.

Belongs to the class-I aminoacyl-tRNA synthetase family. As to quaternary structure, monomer. Zn(2+) is required as a cofactor.

The protein resides in the cytoplasm. The catalysed reaction is tRNA(Cys) + L-cysteine + ATP = L-cysteinyl-tRNA(Cys) + AMP + diphosphate. This Corynebacterium kroppenstedtii (strain DSM 44385 / JCM 11950 / CIP 105744 / CCUG 35717) protein is Cysteine--tRNA ligase.